Consider the following 428-residue polypeptide: Chaperone SurA (428 aa).

Positions 1-20 (MKNWKTLLLGIAMIANTSFA) are cleaved as a signal peptide. PpiC domains follow at residues 171–272 (STEL…KVND) and 282–382 (VTEV…ELLD).

It localises to the periplasm. It carries out the reaction [protein]-peptidylproline (omega=180) = [protein]-peptidylproline (omega=0). Chaperone involved in the correct folding and assembly of outer membrane proteins. Recognizes specific patterns of aromatic residues and the orientation of their side chains, which are found more frequently in integral outer membrane proteins. May act in both early periplasmic and late outer membrane-associated steps of protein maturation. The chain is Chaperone SurA from Shigella dysenteriae serotype 1 (strain Sd197).